Reading from the N-terminus, the 226-residue chain is Lipoprotein-releasing system ATP-binding protein LolD (226 aa).

The ABC transporter domain occupies 5–226 (LKATNINKIY…LLRNGHWENY (222 aa)). 41–48 (GTSGSGKS) provides a ligand contact to ATP.

It belongs to the ABC transporter superfamily. Lipoprotein translocase (TC 3.A.1.125) family. In terms of assembly, the complex is composed of two ATP-binding proteins (LolD) and two transmembrane proteins (LolC and LolE).

The protein resides in the cell inner membrane. Functionally, part of the ABC transporter complex LolCDE involved in the translocation of mature outer membrane-directed lipoproteins, from the inner membrane to the periplasmic chaperone, LolA. Responsible for the formation of the LolA-lipoprotein complex in an ATP-dependent manner. The protein is Lipoprotein-releasing system ATP-binding protein LolD of Psychrobacter arcticus (strain DSM 17307 / VKM B-2377 / 273-4).